A 409-amino-acid chain; its full sequence is Elongation factor Tu, chloroplastic (409 aa).

Residues 10 to 214 (KPHVNIGTIG…KIDEYIPTPE (205 aa)) form the tr-type G domain. Residues 19–26 (GHVDHGKT) form a G1 region. 19-26 (GHVDHGKT) is a binding site for GTP. Thr-26 provides a ligand contact to Mg(2+). Residues 60–64 (GITIN) are G2. The segment at 81 to 84 (DCPG) is G3. GTP-binding positions include 81-85 (DCPGH) and 136-139 (NKAD). The G4 stretch occupies residues 136 to 139 (NKAD). The G5 stretch occupies residues 174–176 (SAL).

This sequence belongs to the TRAFAC class translation factor GTPase superfamily. Classic translation factor GTPase family. EF-Tu/EF-1A subfamily.

The protein resides in the plastid. The protein localises to the chloroplast. The enzyme catalyses GTP + H2O = GDP + phosphate + H(+). Its function is as follows. GTP hydrolase that promotes the GTP-dependent binding of aminoacyl-tRNA to the A-site of ribosomes during protein biosynthesis. In Rhodomonas salina (Cryptomonas salina), this protein is Elongation factor Tu, chloroplastic (tufA).